The primary structure comprises 499 residues: Cytochrome P450 monooxygenase ausI (499 aa).

The helical transmembrane segment at 10–30 (PLGQPLIAGFVVVSAVLYLLY) threads the bilayer. C439 is a heme binding site. N-linked (GlcNAc...) asparagine glycosylation occurs at N483.

The protein belongs to the cytochrome P450 family. The cofactor is heme.

It is found in the membrane. Its pathway is secondary metabolite biosynthesis; terpenoid biosynthesis. In terms of biological role, cytochrome P450 monooxygenase; part of the gene cluster B that mediates the biosynthesis of austinol and dehydroaustinol, two fungal meroterpenoids. The first step of the pathway is the synthesis of 3,5-dimethylorsellinic acid by the polyketide synthase ausA. 3,5-dimethylorsellinic acid is then prenylated by the polyprenyl transferase ausN. Further epoxidation by the FAD-dependent monooxygenase ausM and cyclization by the probable terpene cyclase ausL lead to the formation of protoaustinoid A. Protoaustinoid A is then oxidized to spiro-lactone preaustinoid A3 by the combined action of the FAD-binding monooxygenases ausB and ausC, and the dioxygenase ausE. Acid-catalyzed keto-rearrangement and ring contraction of the tetraketide portion of preaustinoid A3 by ausJ lead to the formation of preaustinoid A4. The aldo-keto reductase ausK, with the help of ausH, is involved in the next step by transforming preaustinoid A4 into isoaustinone which is in turn hydroxylated by the P450 monooxygenase ausI to form austinolide. Finally, the cytochrome P450 monooxygenase ausG modifies austinolide to austinol. Austinol can be further modified to dehydroaustinol which forms a diffusible complex with diorcinol that initiates conidiation. Due to genetic rearrangements of the clusters and the subsequent loss of some enzymes, the end products of the Emericella nidulans austinoid biosynthesis clusters are austinol and dehydroaustinol, even if additional enzymes, such as the O-acetyltransferase ausQ and the cytochrome P450 monooxygenase ausR are still functional. This is Cytochrome P450 monooxygenase ausI from Emericella nidulans (strain FGSC A4 / ATCC 38163 / CBS 112.46 / NRRL 194 / M139) (Aspergillus nidulans).